We begin with the raw amino-acid sequence, 256 residues long: MAAPMFSIIIPTLNVAAVLPACLDSIARQTCGDFELVLVDGGSTDETLDIANIFAPNLGERLIIHRDTDQGVYDAMNRGVDLATGTWLLFLGADDSLYEADTLARVAAFIGEHEPSDLVYGDVIMRSTNFRWGGAFDLDRLLFKRNICHQAIFYRRGLFGTIGPYNLRYRVLADWDFNIRCFSNPALVTRYMHVVVASYNEFGGLSNTIVDKEFLKRLPMSTRLGIRLVIVLVRRWPKVISRAMVMRTVISWRRRR.

It belongs to the glycosyltransferase 2 family.

Its function is as follows. Involved in glycosylation steps downstream of mono-O-methyl-glycosyl-p-hydroxybenzoic acid derivative (p-HBAD I) and 2-O-methyl-rhamnosyl-phenolphthiocerol dimycocerosate (mycoside B) during the p-hydroxybenzoic acid derivatives (p-HBAD) and glycosylated phenolphthiocerol dimycocerosates (PGL) biosynthesis. This chain is PGL/p-HBAD biosynthesis glycosyltransferase Mb2981, found in Mycobacterium bovis (strain ATCC BAA-935 / AF2122/97).